A 128-amino-acid chain; its full sequence is Large ribosomal subunit protein uL22 (128 aa).

It belongs to the universal ribosomal protein uL22 family. Part of the 50S ribosomal subunit.

This protein binds specifically to 23S rRNA; its binding is stimulated by other ribosomal proteins, e.g. L4, L17, and L20. It is important during the early stages of 50S assembly. It makes multiple contacts with different domains of the 23S rRNA in the assembled 50S subunit and ribosome. Its function is as follows. The globular domain of the protein is located near the polypeptide exit tunnel on the outside of the subunit, while an extended beta-hairpin is found that lines the wall of the exit tunnel in the center of the 70S ribosome. The polypeptide is Large ribosomal subunit protein uL22 (Methylocella silvestris (strain DSM 15510 / CIP 108128 / LMG 27833 / NCIMB 13906 / BL2)).